A 506-amino-acid polypeptide reads, in one-letter code: Glucan endo-1,3-beta-glucosidase 13 (506 aa).

A signal peptide spans 1-22 (MARDFKLIFSISILLLLLDCCY). Asparagine 70 carries an N-linked (GlcNAc...) asparagine glycan. The Proton donor role is filled by glutamate 119. 3 N-linked (GlcNAc...) asparagine glycosylation sites follow: asparagine 127, asparagine 175, and asparagine 212. Glutamate 264 functions as the Nucleophile in the catalytic mechanism. Residues asparagine 356 and asparagine 361 are each glycosylated (N-linked (GlcNAc...) asparagine). A disulfide bridge connects residues cysteine 370 and cysteine 433. N-linked (GlcNAc...) asparagine glycosylation is found at asparagine 459 and asparagine 465. Residue serine 471 is the site of GPI-anchor amidated serine attachment. Positions 472–506 (SASTPRGNELLQWILKLCLMISLFFSLQTMNSQAL) are cleaved as a propeptide — removed in mature form.

The protein belongs to the glycosyl hydrolase 17 family. Contains two additional disulfide bonds.

It localises to the secreted. Its subcellular location is the cell wall. It is found in the cell membrane. It catalyses the reaction Hydrolysis of (1-&gt;3)-beta-D-glucosidic linkages in (1-&gt;3)-beta-D-glucans.. This Arabidopsis thaliana (Mouse-ear cress) protein is Glucan endo-1,3-beta-glucosidase 13.